Here is a 108-residue protein sequence, read N- to C-terminus: Thiosulfate sulfurtransferase GlpE (108 aa).

The Rhodanese domain maps to 17–105; that stretch reads QEKEAVLVDI…WQRQFPAEVA (89 aa). The active-site Cysteine persulfide intermediate is the C65.

This sequence belongs to the GlpE family.

The protein resides in the cytoplasm. It carries out the reaction thiosulfate + hydrogen cyanide = thiocyanate + sulfite + 2 H(+). It catalyses the reaction thiosulfate + [thioredoxin]-dithiol = [thioredoxin]-disulfide + hydrogen sulfide + sulfite + 2 H(+). Functionally, transferase that catalyzes the transfer of sulfur from thiosulfate to thiophilic acceptors such as cyanide or dithiols. May function in a CysM-independent thiosulfate assimilation pathway by catalyzing the conversion of thiosulfate to sulfite, which can then be used for L-cysteine biosynthesis. This is Thiosulfate sulfurtransferase GlpE from Escherichia coli O139:H28 (strain E24377A / ETEC).